An 85-amino-acid polypeptide reads, in one-letter code: Conotoxin Mi15b (85 aa).

Residues 1-23 form the signal peptide; that stretch reads MEKLTVLILVAIVLLTIQVLGQS. Residues 24–49 constitute a propeptide that is removed on maturation; the sequence is DRDKHPKRRPRQYATKRLSALMKGHR. At Q50 the chain carries Pyrrolidone carboxylic acid.

The protein belongs to the conotoxin O2 superfamily. In terms of processing, contains 4 disulfide bonds. As to expression, expressed by the venom duct.

Its subcellular location is the secreted. This Conus miles (Soldier cone) protein is Conotoxin Mi15b.